The chain runs to 1277 residues: NPC intracellular cholesterol transporter 1 (1277 aa).

Residues 1–22 (MSARGPAFGLLLLLLCPVQVFS) form the signal peptide. Residues 23-269 (QSCVWYGECG…WRILGLDAMY (247 aa)) are Lumenal-facing. Cystine bridges form between Cys-25/Cys-74, Cys-31/Cys-42, Cys-63/Cys-109, Cys-75/Cys-113, Cys-97/Cys-238, Cys-100/Cys-160, Cys-177/Cys-184, Cys-227/Cys-243, and Cys-240/Cys-247. Asn-41 is a binding site for cholesterol. An N-linked (GlcNAc...) asparagine glycan is attached at Asn-70. Gln-79 contributes to the cholesterol binding site. 2 N-linked (GlcNAc...) asparagine glycosylation sites follow: Asn-122 and Asn-135. An important for cholesterol binding and cholesterol transfer from NPC1 to liposomes region spans residues 175–205 (LLCGREAQACNATNWIEYMFNKDNGQAPFTI). Asn-185 and Asn-222 each carry an N-linked (GlcNAc...) asparagine glycan. A helical membrane pass occupies residues 270-290 (VIMWSSYMAFLIVFFGAFFAV). Residues 291 to 350 (WCYRKRYFVSEYTPIDGNIAFSVNSSDKGQAFCCDPLGAAFERGLRRLFAQWGAFCVRHP) lie on the Cytoplasmic side of the membrane. A helical transmembrane segment spans residues 351 to 371 (GCVVFFSLAFIVACSSGLVFI). At 372 to 621 (RVTTDPVDLW…ELNRESNSDL (250 aa)) the chain is on the lumenal side. Residues Asn-415, Asn-452, Asn-459, and Asn-478 are each glycosylated (N-linked (GlcNAc...) asparagine). Cystine bridges form between Cys-468–Cys-479 and Cys-516–Cys-533. Residues 620–785 (DLFTILISYA…ITCFVSLLGL (166 aa)) form the SSD domain. A helical transmembrane segment spans residues 622-642 (FTILISYAIMFLYISIALGHI). Over 643 to 653 (KSCSRLLVDSK) the chain is Cytoplasmic. The chain crosses the membrane as a helical span at residues 654-674 (ISLGIAGILIVLSSVACSLGI). Over 675–677 (FSY) the chain is Lumenal. The chain crosses the membrane as a helical span at residues 678–698 (IGVPLTLIVIEVIPFLVLAVG). Topologically, residues 699–734 (VDNIFILVQTYQRDERLQGETLDQQLGRVLGEVAPS) are cytoplasmic. Residues 735–755 (MFLSSFSETVAFFLGGLSVVP) form a helical membrane-spanning segment. At 756–759 (AVHT) the chain is on the lumenal side. The helical transmembrane segment at 760-780 (FSLFAGMAVLIDFLLQITCFV) threads the bilayer. Residues 781–832 (SLLGLDIKRQEKNRLDVVCCVQGAEDGAGVQASESCLFRFFKNSYAPLLLKD) are Cytoplasmic-facing. The helical transmembrane segment at 833–853 (WMRPIVIAVFVGVLSFSIAVL) threads the bilayer. Over 854–1097 (NKVEIGLDQS…EQYLTVIDDT (244 aa)) the chain is Lumenal. The N-linked (GlcNAc...) asparagine glycan is linked to Asn-898. An intrachain disulfide couples Cys-909 to Cys-914. 6 N-linked (GlcNAc...) asparagine glycosylation sites follow: Asn-916, Asn-931, Asn-961, Asn-968, Asn-1028, and Asn-1063. Intrachain disulfides connect Cys-956–Cys-1011, Cys-957–Cys-979, and Cys-967–Cys-976. A helical transmembrane segment spans residues 1098–1118 (IFNLGVSLGAIFLVTVVLMGC). At 1119-1123 (ELWAT) the chain is on the cytoplasmic side. A helical transmembrane segment spans residues 1124 to 1144 (VIMCVTIAMILVNMFGVMWLW). A topological domain (lumenal) is located at residue Gly-1145. The chain crosses the membrane as a helical span at residues 1146-1166 (ISLNAVSLVNLVMSCGISVEF). Residues 1167–1194 (CSHITRAFTLSTKGSRVDRAEEALAHMG) lie on the Cytoplasmic side of the membrane. A helical membrane pass occupies residues 1195–1215 (SSVFSGITLTKFGGIVVLAFA). Residues 1216–1226 (KSQIFQIFYFR) are Lumenal-facing. Residues 1227–1247 (MYLAIVLLGATHGLIFLPVLL) traverse the membrane as a helical segment. Residues 1248 to 1277 (SYIGPSINKAKSLATQERYKGTEREQLLNF) lie on the Cytoplasmic side of the membrane. The interval 1274–1277 (LLNF) is required for location in lysosomes. A Di-leucine motif motif is present at residues 1274–1277 (LLNF).

Belongs to the patched family. In terms of assembly, interacts (via the second lumenal domain) with NPC2. Interacts with TMEM97; the interaction may decrease NPC1 availability to the cell. Interacts with TIM1. Interacts with SLC38A9; this interaction inhibits cholesterol-mediated mTORC1 activation via its sterol transport activity. In terms of processing, N-glycosylated. In terms of tissue distribution, detected in corpus luteum, granulosa cells and adrenal gland.

The protein resides in the late endosome membrane. Its subcellular location is the lysosome membrane. The enzyme catalyses cholesterol(in) = cholesterol(out). In terms of biological role, intracellular cholesterol transporter which acts in concert with NPC2 and plays an important role in the egress of cholesterol from the endosomal/lysosomal compartment. Unesterified cholesterol that has been released from LDLs in the lumen of the late endosomes/lysosomes is transferred by NPC2 to the cholesterol-binding pocket in the N-terminal domain of NPC1. Cholesterol binds to NPC1 with the hydroxyl group buried in the binding pocket. Binds oxysterol with higher affinity than cholesterol. May play a role in vesicular trafficking in glia, a process that may be crucial for maintaining the structural and functional integrity of nerve terminals. Inhibits cholesterol-mediated mTORC1 activation throught its interaction with SLC38A9. The chain is NPC intracellular cholesterol transporter 1 from Sus scrofa (Pig).